Reading from the N-terminus, the 2038-residue chain is MSSSEPPPRYEPPVEPVNGIVQPPVIPPAERPGRNTNQLQYLIKTVMKVIWKHHFSWPFQQPVDAKKLNLPDYHKIIKQPMDMGTIKKRLENNYYWSAKETIQDFNTMFNNCYVYNKPGEDVVVMAQTLEKVFLQKIESMPKEELELEPVTAKGGKKKQRAPATPKSSSGGAGASTGSGTSSAAVTSGPGSGSTKVSVAASSAQQSGLQGATGAGGGSSSTPGTQPGSGAGGAIAARPVSAMGGTVSSTAGGAPSIPPISTMPPHTVPGSTNTTTTAMAGGVGGPGAAGANPNAAALMASLLNAGQTGAYPGAPGQTAVNSSSLLDGSTAAVAAAAAAAAAAAAAAGGAAGAAGGAGTIPAVAVNAANAVQAYVNAGVSVGVDAVIPPQQPAKIKKGVKRKADTTTPTANAFESPYTQMDSKSAKIATRRESNRQDLTFQGSGYNMSPLGVSGVPGLGGLVAGGVAGVAVAKNKEKLSDALKSCNEILKELFSKKHSGYAWPFYKPVDAEMLGLHDYHDIIKKPMDLGTVKRKMDNREYKSAPEFAADVRLIFTNCYKYNPPDHDVVAMGRKLQDVFEMRYANIPDEPVANAAHHHGHGHGHGHGHGHGHGHGHGHGHGHGYGGSSSLKHDASDSSSEDSSDTENESNSDEERSARLKMLESKLLGLQEEIRKLSEEASAKKKAKKKLKEKKKSIGGGSGSGSASHHCHATGGGANAGGAGGPGSGGHGSVSVPGGVGSLGPGGAGGANLNALLGGSLVGHGGAAVAGGVPNVGALHSQVHDVAMAFSQMAGGGAAAGAGFGAGVTAAGASSGGKAGTLAGALAAGAAAGAGGTTAGSGSSKGAKSKGGRGAKGSGAGGVGASNNAAAGNAAGGAAGAAAGAGSVGGVGGAGAAGGGNASKRAKGSSSAGAGGGVGGANASAGGAGARGSSKKKPSQVMNFDSEEEDTAKPMSYDEKRQLSLDINKLPGDKLGRVVHIIQNREPSLRDSNPDEIEIDFETLKPSTLRELESYVASCLRKKTHKKPSGKSKDEQMAEKKQELEKRLQDVTGQLGASKKTAKKDESASSKVEAVQPANPVSSSSSSSDSSSSSSSDSSSSDSSDSEAGDGDERPPRKKKSRDSNGSNVNNPSINVVMGGNLPSGALSPTTMLMGLDHVVNSNTPTSQMSNMLGNANPLTAAAMLNNNNKTSLPGSNFGGAPAPGNMMHAGAGVPVAGAAVSASTGQQHNKNGPNDLSKVQPGGPINAALPPHSFAGGTATVATSQSSGGIRIASNLHKPSGLGGGDLGEHHAALAAALTSGINSTGTAGGGINNNGGSNNNANPLGGSHGDAMVNASLASLASGLKQIPQFDDPVEQSLASLEFSAGSTGKSGLTDNFLMQQHLMQPAGPQQQQQQQQQQPFGHQQQQQQQQQQQQQQQQHMDYVTELLSKGAENVGGMNGNHLLNFNLDMAAAYQQKHPQQQQQQAHNNGFNVADFGMAGFDGLNMTAASFLDLEPSLQQQQMQQMQLQQQHHQQQQQQTHQQQQQHQQQHHQQQQQQQLTQQQLQQQQQQQQQQQHLQQQQHQQQHHQAANKLLIIPKPIESMMPSPPDKQQLQQHQKVLPPQQSPSDMKLHPNAAAAAAVASAQAKLVQTFKANEQNLKNASSWSSLASANSPQSHTSSSSSSSKAKPAMDSFQQFRNKAKERDRLKLLEAAEKEKKNQKEAAEKEQQRKHHKSSSSSLTSAAVAQAAAIAAATAAAAVTLGAAAAAALASSASNPSGGSSSGGAGSTSQQAITGDRDRDRDRERERERSGSGGGQSGNGNNSSNSANSNGPGSAGSGGSGGGGGSGPASAGGPNSGGGGTANSNSGGGGGGGGPALLNAGSNSNSGVGSGGAASSNSNSSVGGIVGSGGPGSNSQGSSGGGGGGPASGGGMGSGAIDYGQQVAVLTQVAANAQAQHVAAAVAAQAILAASPLGAMESGRKSVHDAQPQISRVEDIKASPGGQGQSSPAQQSPQDRAAAKRAEQRRAEQERRRREALAGQIDMNMQSDLMAAFEETL.

Positions 34–140 (RNTNQLQYLI…KVFLQKIESM (107 aa)) constitute a Bromo 1 domain. Residues 145–284 (LELEPVTAKG…TTAMAGGVGG (140 aa)) are disordered. Low complexity-rich tracts occupy residues 177–209 (GSGT…SGLQ) and 268–279 (PGSTNTTTTAMA). Residues 330 to 350 (AAVAAAAAAAAAAAAAAGGAA) traverse the membrane as a helical segment. Positions 396–432 (KGVKRKADTTTPTANAFESPYTQMDSKSAKIATRRES) are disordered. Positions 404–421 (TTTPTANAFESPYTQMDS) are enriched in polar residues. A helical membrane pass occupies residues 451–471 (VSGVPGLGGLVAGGVAGVAVA). Ser-452 carries the phosphoserine modification. One can recognise a Bromo 2 domain in the interval 475-584 (EKLSDALKSC…DVFEMRYANI (110 aa)). Disordered stretches follow at residues 590 to 655 (ANAA…ERSA) and 677 to 735 (EASA…SVPG). A compositionally biased stretch (basic residues) spans 593-619 (AHHHGHGHGHGHGHGHGHGHGHGHGHG). Residues 636–649 (SSEDSSDTENESNS) are compositionally biased toward acidic residues. Residues 681 to 694 (KKKAKKKLKEKKKS) are compositionally biased toward basic residues. The span at 711-735 (TGGGANAGGAGGPGSGGHGSVSVPG) shows a compositional bias: gly residues. 3 helical membrane passes run 750–770 (LNAL…AGGV), 790–810 (MAGG…AAGA), and 816–830 (AGTL…AAAG). Disordered stretches follow at residues 832–858 (GGTT…SGAG), 891–956 (AGAA…SYDE), 1016–1139 (CLRK…GGNL), 1217–1260 (AVSA…ATVA), 1384–1416 (QPAG…QQQQ), 1502–1530 (MQQM…QQQH), 1580–1616 (IESM…PNAA), 1645–1728 (WSSL…VAQA), 1745–1918 (AAAA…SGAI), and 1957–2023 (MESG…GQID). A helical membrane pass occupies residues 874-894 (GAAGAAAGAGSVGGVGGAGAA). The span at 910-927 (GAGGGVGGANASAGGAGA) shows a compositional bias: gly residues. The NET domain maps to 942-1024 (DSEEEDTAKP…SCLRKKTHKK (83 aa)). Ser-943 bears the Phosphoserine mark. Basic residues predominate over residues 1017–1027 (LRKKTHKKPSG). Basic and acidic residues predominate over residues 1028 to 1046 (KSKDEQMAEKKQELEKRLQ). A compositionally biased stretch (low complexity) spans 1079 to 1100 (SSSSSSSDSSSSSSSDSSSSDS). Polar residues-rich tracts occupy residues 1121 to 1131 (SNGSNVNNPSI) and 1222 to 1232 (TGQQHNKNGPN). The segment covering 1645 to 1665 (WSSLASANSPQSHTSSSSSSS) has biased composition (low complexity). A Phosphoserine modification is found at Ser-1653. Over residues 1680–1708 (KAKERDRLKLLEAAEKEKKNQKEAAEKEQ) the composition is skewed to basic and acidic residues. Low complexity-rich tracts occupy residues 1716–1728 (SSSS…VAQA) and 1745–1760 (AAAA…PSGG). Residues 1731 to 1751 (IAAATAAAAVTLGAAAAAALA) traverse the membrane as a helical segment. Positions 1776 to 1791 (GDRDRDRDRERERERS) are enriched in basic and acidic residues. Low complexity predominate over residues 1800–1813 (NGNNSSNSANSNGP). Gly residues-rich tracts occupy residues 1814-1828 (GSAG…GGSG) and 1835-1856 (PNSG…GGGP). Positions 1857-1884 (ALLNAGSNSNSGVGSGGAASSNSNSSVG) are enriched in low complexity. Residues 1885–1915 (GIVGSGGPGSNSQGSSGGGGGGPASGGGMGS) are compositionally biased toward gly residues. A helical transmembrane segment spans residues 1939-1959 (VAAAVAAQAILAASPLGAMES). Residues Ser-1980 and Ser-1988 each carry the phosphoserine modification. A compositionally biased stretch (low complexity) spans 1986–1997 (QSSPAQQSPQDR). The segment covering 1998–2017 (AAAKRAEQRRAEQERRRREA) has biased composition (basic and acidic residues).

The protein localises to the membrane. In terms of biological role, required maternally for proper expression of other homeotic genes involved in pattern formation, such as Ubx. The sequence is that of Homeotic protein female sterile (fs(1)h) from Drosophila melanogaster (Fruit fly).